The following is a 465-amino-acid chain: Cysteine--tRNA ligase (465 aa).

C30 contacts Zn(2+). The short motif at 32 to 42 is the 'HIGH' region element; it reads ITVYDYCHVGH. Zn(2+) contacts are provided by C214, H239, and E243. Positions 271-275 match the 'KMSKS' region motif; that stretch reads KMSKS. ATP is bound at residue K274.

This sequence belongs to the class-I aminoacyl-tRNA synthetase family. In terms of assembly, monomer. Zn(2+) serves as cofactor.

Its subcellular location is the cytoplasm. It catalyses the reaction tRNA(Cys) + L-cysteine + ATP = L-cysteinyl-tRNA(Cys) + AMP + diphosphate. This Burkholderia multivorans (strain ATCC 17616 / 249) protein is Cysteine--tRNA ligase.